We begin with the raw amino-acid sequence, 483 residues long: Altronate oxidoreductase (483 aa).

An NAD(+)-binding site is contributed by 18–29 (IIQFGEGNFLRA).

It belongs to the mannitol dehydrogenase family. UxaB subfamily.

The enzyme catalyses D-altronate + NAD(+) = keto-D-tagaturonate + NADH + H(+). It functions in the pathway carbohydrate metabolism; pentose and glucuronate interconversion. This is Altronate oxidoreductase from Escherichia coli O6:K15:H31 (strain 536 / UPEC).